Reading from the N-terminus, the 282-residue chain is MAAVTPALIKELRERTGVGMGKCKEALEEANGDMELAIANLRKAGMASAVKKEGRETKEGMIGTAENEKTIAIVEVNAETDFVVKNERFKEFLENIAREVANTNPSSLDAFLQQKYSKESSLTVDQYRATIVQTIGENIQIKRIMTLQKSPERSFGIYSHLGGKIVTMVEITGSNQEEALAKDIAMHIAATAPDYLSPEKIPQEIITSEKDIAKGQIQGKPANIVDKIVEGKINAFYDTNCLVRQKYIKDDSLSITDLVNQRSKVVGKELAVTNFIRWNVGQ.

The interval 80-83 (TDFV) is involved in Mg(2+) ion dislocation from EF-Tu.

This sequence belongs to the EF-Ts family.

The protein resides in the cytoplasm. In terms of biological role, associates with the EF-Tu.GDP complex and induces the exchange of GDP to GTP. It remains bound to the aminoacyl-tRNA.EF-Tu.GTP complex up to the GTP hydrolysis stage on the ribosome. In Protochlamydia amoebophila (strain UWE25), this protein is Elongation factor Ts.